A 326-amino-acid polypeptide reads, in one-letter code: Ornithine carbamoyltransferase (326 aa).

Carbamoyl phosphate-binding positions include S57–T60, Q84, R108, and H135–Q138. Residues N169, D233, and S237 to M238 contribute to the L-ornithine site. C275–L276 contacts carbamoyl phosphate.

The protein belongs to the aspartate/ornithine carbamoyltransferase superfamily. OTCase family.

It localises to the cytoplasm. The enzyme catalyses carbamoyl phosphate + L-ornithine = L-citrulline + phosphate + H(+). It participates in amino-acid biosynthesis; L-arginine biosynthesis; L-arginine from L-ornithine and carbamoyl phosphate: step 1/3. Its function is as follows. Reversibly catalyzes the transfer of the carbamoyl group from carbamoyl phosphate (CP) to the N(epsilon) atom of ornithine (ORN) to produce L-citrulline. The protein is Ornithine carbamoyltransferase of Escherichia coli O6:K15:H31 (strain 536 / UPEC).